Reading from the N-terminus, the 66-residue chain is uncharacterized protein (66 aa).

Residues Met1–Gly19 form the signal peptide.

This is an uncharacterized protein from Saccharomyces cerevisiae (strain ATCC 204508 / S288c) (Baker's yeast).